The primary structure comprises 310 residues: Glutaminase 1 (310 aa).

Substrate-binding residues include Ser-66, Asn-117, Glu-161, Asn-168, Tyr-192, Tyr-244, and Val-262. At Lys-294 the chain carries N6-acetyllysine.

Belongs to the glutaminase family. Homotetramer.

It catalyses the reaction L-glutamine + H2O = L-glutamate + NH4(+). The chain is Glutaminase 1 from Escherichia coli (strain K12).